Reading from the N-terminus, the 306-residue chain is Acetyl-coenzyme A carboxylase carboxyl transferase subunit beta (306 aa).

A CoA carboxyltransferase N-terminal domain is found at 27–296 (LWHKCPSCEA…PRFVAPVIEP (270 aa)). Residues Cys-31, Cys-34, Cys-50, and Cys-53 each coordinate Zn(2+). Residues 31–53 (CPSCEAVLYRPELEKTLDVCPKC) form a C4-type zinc finger.

This sequence belongs to the AccD/PCCB family. Acetyl-CoA carboxylase is a heterohexamer composed of biotin carboxyl carrier protein (AccB), biotin carboxylase (AccC) and two subunits each of ACCase subunit alpha (AccA) and ACCase subunit beta (AccD). The cofactor is Zn(2+).

The protein resides in the cytoplasm. The catalysed reaction is N(6)-carboxybiotinyl-L-lysyl-[protein] + acetyl-CoA = N(6)-biotinyl-L-lysyl-[protein] + malonyl-CoA. Its pathway is lipid metabolism; malonyl-CoA biosynthesis; malonyl-CoA from acetyl-CoA: step 1/1. Functionally, component of the acetyl coenzyme A carboxylase (ACC) complex. Biotin carboxylase (BC) catalyzes the carboxylation of biotin on its carrier protein (BCCP) and then the CO(2) group is transferred by the transcarboxylase to acetyl-CoA to form malonyl-CoA. In Pseudomonas syringae pv. syringae (strain B728a), this protein is Acetyl-coenzyme A carboxylase carboxyl transferase subunit beta.